Consider the following 358-residue polypeptide: Peptide chain release factor 1 (358 aa).

Residue Gln234 is modified to N5-methylglutamine.

The protein belongs to the prokaryotic/mitochondrial release factor family. In terms of processing, methylated by PrmC. Methylation increases the termination efficiency of RF1.

It is found in the cytoplasm. In terms of biological role, peptide chain release factor 1 directs the termination of translation in response to the peptide chain termination codons UAG and UAA. The chain is Peptide chain release factor 1 from Chloroherpeton thalassium (strain ATCC 35110 / GB-78).